Consider the following 346-residue polypeptide: Glucose-6-phosphatase 3 (346 aa).

Residues Met1–Met25 lie on the Lumenal side of the membrane. The helical transmembrane segment at Trp26–Val46 threads the bilayer. Topologically, residues Tyr47 to Ser56 are cytoplasmic. Residues Leu57 to Gly77 form a helical membrane-spanning segment. The Lumenal segment spans residues Asp78–Cys115. Arg79 is a binding site for substrate. His114 functions as the Proton donor in the catalytic mechanism. The chain crosses the membrane as a helical span at residues Met116–Ser135. Topologically, residues Gln136–Pro140 are cytoplasmic. A helical membrane pass occupies residues Trp141–Val162. Arg161 serves as a coordination point for substrate. At Phe163 to His167 the chain is on the lumenal side. Residue His167 is the Nucleophile of the active site. Residues Phe168–Leu186 form a helical membrane-spanning segment. The Cytoplasmic segment spans residues Ser187 to Ser197. Residues Phe198–Phe218 traverse the membrane as a helical segment. Residues Thr219 to Asp254 lie on the Lumenal side of the membrane. Residues Ser255–Ile273 traverse the membrane as a helical segment. Residues Arg274–Lys283 lie on the Cytoplasmic side of the membrane. A helical membrane pass occupies residues Ile284–Pro304. At Gln305–Ser307 the chain is on the lumenal side. A helical membrane pass occupies residues Leu308–Val328. Residues Pro329 to Ser346 lie on the Cytoplasmic side of the membrane.

The protein belongs to the glucose-6-phosphatase family. As to expression, expressed in liver and kidney. It is the major glucose-6-phosphatase expressed in the small intestine.

The protein localises to the endoplasmic reticulum membrane. The enzyme catalyses D-glucose 6-phosphate + H2O = D-glucose + phosphate. It functions in the pathway carbohydrate biosynthesis; gluconeogenesis. With respect to regulation, inhibited by vanadate. In terms of biological role, hydrolyzes glucose-6-phosphate to glucose in the endoplasmic reticulum. May form with the glucose-6-phosphate transporter (SLC37A4/G6PT) a ubiquitously expressed complex responsible for glucose production through glycogenolysis and gluconeogenesis. Probably required for normal neutrophil function. In Rattus norvegicus (Rat), this protein is Glucose-6-phosphatase 3 (G6pc3).